The sequence spans 175 residues: Peptide deformylase (175 aa).

Positions 99 and 141 each coordinate Fe cation. Glutamate 142 is an active-site residue. Histidine 145 lines the Fe cation pocket.

This sequence belongs to the polypeptide deformylase family. Fe(2+) is required as a cofactor.

The enzyme catalyses N-terminal N-formyl-L-methionyl-[peptide] + H2O = N-terminal L-methionyl-[peptide] + formate. Removes the formyl group from the N-terminal Met of newly synthesized proteins. Requires at least a dipeptide for an efficient rate of reaction. N-terminal L-methionine is a prerequisite for activity but the enzyme has broad specificity at other positions. This chain is Peptide deformylase, found in Rickettsia prowazekii (strain Madrid E).